Here is a 364-residue protein sequence, read N- to C-terminus: MQGKEILKQLSPYKQGKQIKDIQKDYQLDYIVKLASNENPYGYSKQVNEALSTENFDFHIYPDGYTSDLRTDLTQKLNIDESEIIFGSGSEEIIQLLCRSYIIPGSNVVMATPTFPQYKHYSLIENAEIKEIPTDKEGYHQLDKMLGSIDDHTAIVWLCTPNNPTGAAFSKEELITFLDNCPKEVLVVLDEAYYEYLHSDKDLDALQLRFTYSNVIVLRTFSKAYGLAGLRIGYGIANSTIIETLDKVRGPFNTNSVAQKAASYALKDQEFIQHTNQENYKNLTEFQHFLQRLGWGYYDSEANFLLVKTPISGMDVYEYLLRFGFIVRPGELLGIPKTVRVTIGKEQDMKELQKVLEQFDHELG.

K223 bears the N6-(pyridoxal phosphate)lysine mark.

Belongs to the class-II pyridoxal-phosphate-dependent aminotransferase family. Histidinol-phosphate aminotransferase subfamily. In terms of assembly, homodimer. Pyridoxal 5'-phosphate serves as cofactor.

It catalyses the reaction L-histidinol phosphate + 2-oxoglutarate = 3-(imidazol-4-yl)-2-oxopropyl phosphate + L-glutamate. It participates in amino-acid biosynthesis; L-histidine biosynthesis; L-histidine from 5-phospho-alpha-D-ribose 1-diphosphate: step 7/9. This chain is Histidinol-phosphate aminotransferase 2 (hisC2), found in Oceanobacillus iheyensis (strain DSM 14371 / CIP 107618 / JCM 11309 / KCTC 3954 / HTE831).